The following is a 435-amino-acid chain: 3-phosphoshikimate 1-carboxyvinyltransferase (435 aa).

3-phosphoshikimate-binding residues include Lys22, Ser23, and Arg27. A phosphoenolpyruvate-binding site is contributed by Lys22. Phosphoenolpyruvate-binding residues include Gly95 and Arg123. The 3-phosphoshikimate site is built by Ser168, Gln170, Asp319, and Lys346. A phosphoenolpyruvate-binding site is contributed by Gln170. Asp319 serves as the catalytic Proton acceptor. The phosphoenolpyruvate site is built by Arg350 and Arg393.

This sequence belongs to the EPSP synthase family. In terms of assembly, monomer.

The protein resides in the cytoplasm. It carries out the reaction 3-phosphoshikimate + phosphoenolpyruvate = 5-O-(1-carboxyvinyl)-3-phosphoshikimate + phosphate. It functions in the pathway metabolic intermediate biosynthesis; chorismate biosynthesis; chorismate from D-erythrose 4-phosphate and phosphoenolpyruvate: step 6/7. Functionally, catalyzes the transfer of the enolpyruvyl moiety of phosphoenolpyruvate (PEP) to the 5-hydroxyl of shikimate-3-phosphate (S3P) to produce enolpyruvyl shikimate-3-phosphate and inorganic phosphate. The polypeptide is 3-phosphoshikimate 1-carboxyvinyltransferase (Chloroflexus aggregans (strain MD-66 / DSM 9485)).